The chain runs to 275 residues: Ribosomal RNA small subunit methyltransferase A (275 aa).

Asn21, Leu23, Gly48, Glu69, Asp94, and Asn115 together coordinate S-adenosyl-L-methionine.

It belongs to the class I-like SAM-binding methyltransferase superfamily. rRNA adenine N(6)-methyltransferase family. RsmA subfamily.

The protein resides in the cytoplasm. The enzyme catalyses adenosine(1518)/adenosine(1519) in 16S rRNA + 4 S-adenosyl-L-methionine = N(6)-dimethyladenosine(1518)/N(6)-dimethyladenosine(1519) in 16S rRNA + 4 S-adenosyl-L-homocysteine + 4 H(+). Specifically dimethylates two adjacent adenosines (A1518 and A1519) in the loop of a conserved hairpin near the 3'-end of 16S rRNA in the 30S particle. May play a critical role in biogenesis of 30S subunits. This chain is Ribosomal RNA small subunit methyltransferase A, found in Clostridium botulinum (strain Langeland / NCTC 10281 / Type F).